Reading from the N-terminus, the 116-residue chain is NADH-ubiquinone oxidoreductase chain 3 (116 aa).

The next 3 helical transmembrane spans lie at 3–23 (LITT…TISF), 56–76 (FFLI…LLPL), and 87–107 (LTLI…IYEW).

This sequence belongs to the complex I subunit 3 family.

The protein localises to the mitochondrion membrane. It catalyses the reaction a ubiquinone + NADH + 5 H(+)(in) = a ubiquinol + NAD(+) + 4 H(+)(out). Its function is as follows. Core subunit of the mitochondrial membrane respiratory chain NADH dehydrogenase (Complex I) that is believed to belong to the minimal assembly required for catalysis. Complex I functions in the transfer of electrons from NADH to the respiratory chain. The immediate electron acceptor for the enzyme is believed to be ubiquinone. In Oncorhynchus keta (Chum salmon), this protein is NADH-ubiquinone oxidoreductase chain 3 (MT-ND3).